Consider the following 246-residue polypeptide: 2-C-methyl-D-erythritol 4-phosphate cytidylyltransferase (246 aa).

This sequence belongs to the IspD/TarI cytidylyltransferase family. IspD subfamily.

It carries out the reaction 2-C-methyl-D-erythritol 4-phosphate + CTP + H(+) = 4-CDP-2-C-methyl-D-erythritol + diphosphate. It functions in the pathway isoprenoid biosynthesis; isopentenyl diphosphate biosynthesis via DXP pathway; isopentenyl diphosphate from 1-deoxy-D-xylulose 5-phosphate: step 2/6. Functionally, catalyzes the formation of 4-diphosphocytidyl-2-C-methyl-D-erythritol from CTP and 2-C-methyl-D-erythritol 4-phosphate (MEP). The polypeptide is 2-C-methyl-D-erythritol 4-phosphate cytidylyltransferase (Chlorobaculum tepidum (strain ATCC 49652 / DSM 12025 / NBRC 103806 / TLS) (Chlorobium tepidum)).